We begin with the raw amino-acid sequence, 566 residues long: Insulinoma-associated protein 2 (566 aa).

The segment at 1–20 (MPRGFLVKRTKRTGGLYRVR) is SNAG domain. Residues 32-117 (QGAPPFLEEA…PSPSPAKPAG (86 aa)) are disordered. Residues 103 to 113 (GPSPSPSPSPA) show a composition bias toward pro residues. The C2H2-type 1; atypical zinc finger occupies 263-283 (FICQLCKEQYADPFALAQHRC). A C2H2-type 2 zinc finger spans residues 291–313 (YRCPECDKVFSCPANLASHRRWH). Residues 310-418 (RRWHKPRPAA…RRVPVPGSTS (109 aa)) are disordered. Over residues 318-348 (AAANAATVSSADGKPPSSSSSSSRDSGAIAS) the composition is skewed to low complexity. Over residues 352–369 (EGKENSRIERTADQHPQA) the composition is skewed to basic and acidic residues. 3 consecutive C2H2-type zinc fingers follow at residues 426–448 (FVCPYCHKKFRRQAYLRKHLSTH), 470–492 (FACPLCGAHFPTADIREKHRLWH), and 525–548 (FSCKHCPSTFFSSPGLTRHINKCH).

In terms of tissue distribution, expressed in heart, liver, skeletal muscle, kidney and pancreas, and, to a lesser extent, in brain, lung and spleen. In the pancreas, expressed in islet cells, including insulin- and glucagon-producing alpha- and beta-cells, but not in acinar cells (at protein level). Detected in adrenal glands, particularly in the deeper layer of the cortex (at protein level).

It localises to the cytoplasm. The protein resides in the nucleus. Its function is as follows. May function as a growth suppressor or tumor suppressor in liver cells and in certain neurons. The chain is Insulinoma-associated protein 2 (INSM2) from Homo sapiens (Human).